The sequence spans 274 residues: 2,3,4,5-tetrahydropyridine-2,6-dicarboxylate N-succinyltransferase (274 aa).

Positions 106 and 143 each coordinate substrate.

It belongs to the transferase hexapeptide repeat family. In terms of assembly, homotrimer.

Its subcellular location is the cytoplasm. It catalyses the reaction (S)-2,3,4,5-tetrahydrodipicolinate + succinyl-CoA + H2O = (S)-2-succinylamino-6-oxoheptanedioate + CoA. Its pathway is amino-acid biosynthesis; L-lysine biosynthesis via DAP pathway; LL-2,6-diaminopimelate from (S)-tetrahydrodipicolinate (succinylase route): step 1/3. This is 2,3,4,5-tetrahydropyridine-2,6-dicarboxylate N-succinyltransferase from Rickettsia akari (strain Hartford).